We begin with the raw amino-acid sequence, 266 residues long: MAAGEISTPQEYISHHLHHLQVGTGFWSINVDSMFFSIALGILFLVIFHRVAKRATSGVPGKLQTAVELIIGFVDGTVRDMFHGKSKLIAPLALTIFVWVFLMNLMDLLPIDLLPQAWAGIYSLLGYDPAHAYLRAVPTADVNITLSMALGVFILVLFYSIKMKGLGGFVKELTMQPFNHPVFIPINLILEGVSLLSKPISLGLRLFGNMYAGELIFILIAGLLPWWSQWLLNVPWAIFHILIITLQAFIFMVLTVVYLSMASEEH.

Helical transmembrane passes span 28–48 (SINV…LVIF), 88–108 (LIAP…LMDL), 141–161 (DVNI…FYSI), 206–226 (LFGN…LLPW), and 237–257 (AIFH…LTVV).

The protein belongs to the ATPase A chain family. In terms of assembly, F-type ATPases have 2 components, CF(1) - the catalytic core - and CF(0) - the membrane proton channel. CF(1) has five subunits: alpha(3), beta(3), gamma(1), delta(1), epsilon(1). CF(0) has three main subunits: a(1), b(2) and c(9-12). The alpha and beta chains form an alternating ring which encloses part of the gamma chain. CF(1) is attached to CF(0) by a central stalk formed by the gamma and epsilon chains, while a peripheral stalk is formed by the delta and b chains.

It is found in the cell inner membrane. In terms of biological role, key component of the proton channel; it plays a direct role in the translocation of protons across the membrane. This Pectobacterium carotovorum subsp. carotovorum (strain PC1) protein is ATP synthase subunit a.